Consider the following 358-residue polypeptide: Homoserine O-succinyltransferase (358 aa).

The active-site Acyl-thioester intermediate is the Cys-146. The substrate site is built by Lys-167 and Ser-196. The Proton acceptor role is filled by His-239. Glu-241 is a catalytic residue. Substrate is bound at residue Arg-253.

Belongs to the MetA family.

It is found in the cytoplasm. The enzyme catalyses L-homoserine + succinyl-CoA = O-succinyl-L-homoserine + CoA. It participates in amino-acid biosynthesis; L-methionine biosynthesis via de novo pathway; O-succinyl-L-homoserine from L-homoserine: step 1/1. Transfers a succinyl group from succinyl-CoA to L-homoserine, forming succinyl-L-homoserine. The polypeptide is Homoserine O-succinyltransferase (Nitrosococcus oceani (strain ATCC 19707 / BCRC 17464 / JCM 30415 / NCIMB 11848 / C-107)).